Reading from the N-terminus, the 387-residue chain is uncharacterized protein (387 aa).

It is found in the mitochondrion. This is an uncharacterized protein from Paramecium tetraurelia.